Consider the following 515-residue polypeptide: Maturase K (515 aa).

Belongs to the intron maturase 2 family. MatK subfamily.

The protein resides in the plastid. It is found in the chloroplast. Functionally, usually encoded in the trnK tRNA gene intron. Probably assists in splicing its own and other chloroplast group II introns. This Pinus tabuliformis (Chinese red pine) protein is Maturase K.